Reading from the N-terminus, the 181-residue chain is Oleosin (181 aa).

A disordered region spans residues 1 to 28; it reads TTTTYDRHFTTTQPHYRQDDRSRYDQQT. A polar region spans residues 1 to 38; sequence TTTTYDRHFTTTQPHYRQDDRSRYDQQTHSQSTSRTLA. The span at 16 to 26 shows a compositional bias: basic and acidic residues; sequence YRQDDRSRYDQ. The next 3 helical transmembrane spans lie at 38 to 58, 69 to 89, and 90 to 110; these read AIIA…LTFI, PLFV…GLAV, and TGFL…SYLF. The hydrophobic stretch occupies residues 39-110; sequence IIALLPVGGI…TGLSSLSYLF (72 aa). Positions 155-181 are disordered; the sequence is EMGDQGQVGVHAQVGGGKEGRKSGDRT. The segment covering 158-167 has biased composition (low complexity); that stretch reads DQGQVGVHAQ. The span at 172–181 shows a compositional bias: basic and acidic residues; that stretch reads KEGRKSGDRT.

Belongs to the oleosin family.

It localises to the lipid droplet. It is found in the membrane. Functionally, may have a structural role to stabilize the lipid body during desiccation of the seed by preventing coalescence of the oil. Probably interacts with both lipid and phospholipid moieties of lipid bodies. May also provide recognition signals for specific lipase anchorage in lipolysis during seedling growth. This chain is Oleosin, found in Helianthus annuus (Common sunflower).